The sequence spans 246 residues: Ribonuclease PH (246 aa).

Phosphate-binding positions include arginine 95 and 133–135 (GTR).

It belongs to the RNase PH family. In terms of assembly, homohexameric ring arranged as a trimer of dimers.

The catalysed reaction is tRNA(n+1) + phosphate = tRNA(n) + a ribonucleoside 5'-diphosphate. Phosphorolytic 3'-5' exoribonuclease that plays an important role in tRNA 3'-end maturation. Removes nucleotide residues following the 3'-CCA terminus of tRNAs; can also add nucleotides to the ends of RNA molecules by using nucleoside diphosphates as substrates, but this may not be physiologically important. Probably plays a role in initiation of 16S rRNA degradation (leading to ribosome degradation) during starvation. In Bordetella bronchiseptica (strain ATCC BAA-588 / NCTC 13252 / RB50) (Alcaligenes bronchisepticus), this protein is Ribonuclease PH.